A 412-amino-acid polypeptide reads, in one-letter code: MSVANLKDLLAEGVSGRGVLVRSDLNVPLDEDGTITDAGRIIASAPTLKALLDADAKVVVAAHLGRPKDGPDPTLSLAPVAVALGEQLGRHVQLAGDVVGADALARAEGLTGGDILLLENIRFDKRETSKNDDDRRALAKQLVELVGTGGVFVSDGFGVVHRKQASVYDIATLLPHYAGTLVADEMRVLEQLTSSTQRPYAVVLGGSKVSDKLGVIESLATKADSIVIGGGMCFTFLAAQGFSVGTSLLEDDMIEVCRGLLETYHDVLRLPVDLVVTEKFAADSPPQTVDVGAVPNGLMGLDIGPGSIKRFSTLLSNAGTIFWNGPMGVFEFPAYAAGTRGVAEAIVAATGKGAFSVVGGGDSAAAVRAMNIPEGAFSHISTGGGASLEYLEGKTLPGIEVLSREQPTGGVL.

Substrate contacts are provided by residues 24 to 26 (DLN), arginine 40, 63 to 66 (HLGR), arginine 122, and arginine 162. Residues lysine 212, glycine 300, glutamate 331, and 360 to 363 (GGDS) each bind ATP.

Belongs to the phosphoglycerate kinase family. In terms of assembly, monomer.

Its subcellular location is the cytoplasm. The catalysed reaction is (2R)-3-phosphoglycerate + ATP = (2R)-3-phospho-glyceroyl phosphate + ADP. It participates in carbohydrate degradation; glycolysis; pyruvate from D-glyceraldehyde 3-phosphate: step 2/5. The polypeptide is Phosphoglycerate kinase (pgk) (Mycobacterium bovis (strain ATCC BAA-935 / AF2122/97)).